Reading from the N-terminus, the 452-residue chain is Phosphoglucosamine mutase (452 aa).

The active-site Phosphoserine intermediate is Ser-112. Mg(2+) contacts are provided by Ser-112, Asp-251, Asp-253, and Asp-255. Ser-112 carries the post-translational modification Phosphoserine.

This sequence belongs to the phosphohexose mutase family. Mg(2+) serves as cofactor. Post-translationally, activated by phosphorylation.

It carries out the reaction alpha-D-glucosamine 1-phosphate = D-glucosamine 6-phosphate. Its function is as follows. Catalyzes the conversion of glucosamine-6-phosphate to glucosamine-1-phosphate. This Bordetella pertussis (strain Tohama I / ATCC BAA-589 / NCTC 13251) protein is Phosphoglucosamine mutase.